The following is a 276-amino-acid chain: C-type lectin domain family 12 member B (276 aa).

The Cytoplasmic segment spans residues 1–43; that stretch reads MSEEVTYATLTFQDSAGARNNRDGNNLRKRGHPAPSPIWRHAA. The ITIM motif motif lies at 5–10; sequence VTYATL. Y7 is subject to Phosphotyrosine. Residues 44–64 form a helical; Signal-anchor for type II membrane protein membrane-spanning segment; the sequence is LGLVTLCLMLLIGLVTLGMMF. The Extracellular segment spans residues 65–276; the sequence is LQISNDINSD…AAPVKTEDLD (212 aa). 3 N-linked (GlcNAc...) asparagine glycosylation sites follow: N91, N176, and N237. Positions 150–264 constitute a C-type lectin domain; the sequence is YQNSCYYFTT…CSAEIFWICE (115 aa). 2 disulfides stabilise this stretch: C172–C263 and C242–C255.

In terms of assembly, homodimer. Interacts (via ITIM motif) with PTPN6. Interacts (via ITIM motif) with PTPN11; this interaction triggers dephosphorylation and activation of PTPN11. In terms of processing, N-glycosylated. In terms of tissue distribution, detected in colon, heart, kidney, liver, lung, mammary gland, ovary, spleen and testis. Expressed in melanocytes (at protein level).

Its subcellular location is the cell membrane. Its function is as follows. Inhibitory receptor postulated to negatively regulate immune and non-immune functions. Upon phosphorylation, recruits SH2 domain-containing PTPN6 and PTPN11 phosphatases to its ITIM motif and antagonizes activation signals. Although it inhibits KLRK1/NKG2D-mediated signaling, it does not bind known ligands of KLRK1/NKG2D and therefore is not its inhibitory counterpart. May limit activation of myeloid cell subsets in response to infection or tissue inflammation. May protect target cells against natural killer cell-mediated lysis. May negatively regulate cell cycle and differentiation of melanocytes via inactivation of STAT3. The protein is C-type lectin domain family 12 member B of Homo sapiens (Human).